The chain runs to 236 residues: Peptidase E (236 aa).

Residues serine 122, aspartate 137, and histidine 159 each act as charge relay system in the active site.

The protein belongs to the peptidase S51 family.

The protein resides in the cytoplasm. The enzyme catalyses Dipeptidase E catalyzes the hydrolysis of dipeptides Asp-|-Xaa. It does not act on peptides with N-terminal Glu, Asn or Gln, nor does it cleave isoaspartyl peptides.. Functionally, hydrolyzes dipeptides containing N-terminal aspartate residues. May play a role in allowing the cell to use peptide aspartate to spare carbon otherwise required for the synthesis of the aspartate family of amino acids. The protein is Peptidase E of Shewanella sp. (strain MR-4).